The primary structure comprises 245 residues: MREALRSLLVALQFLTRLPVRLSAMPTPEQFGRAVLCYPLVGVLIGVVLYAAARSLDGTPPLLQAALLLSLWVALSGALHLDGLADMADAWVGGLGDRERTLAIMKDPRSGPVAVVVLVLVLLLKFSALAALLGQGEAGLLPLAPWLARSSLPLLFLTTPYARPGGLGQAIAEHLPARSLPWVLGVSFGLALAFGLAGLLALLVTLMLFAWLRSRFLARLGGTTGDTAGALVELTECAVLVALAL.

The next 5 helical transmembrane spans lie at 31 to 51, 61 to 81, 113 to 133, 138 to 158, and 192 to 212; these read FGRA…VLYA, PLLQ…ALHL, VAVV…AALL, AGLL…LFLT, and LAFG…FAWL.

It belongs to the CobS family. Mg(2+) is required as a cofactor.

The protein localises to the cell inner membrane. It carries out the reaction alpha-ribazole + adenosylcob(III)inamide-GDP = adenosylcob(III)alamin + GMP + H(+). The catalysed reaction is alpha-ribazole 5'-phosphate + adenosylcob(III)inamide-GDP = adenosylcob(III)alamin 5'-phosphate + GMP + H(+). It participates in cofactor biosynthesis; adenosylcobalamin biosynthesis; adenosylcobalamin from cob(II)yrinate a,c-diamide: step 7/7. Functionally, joins adenosylcobinamide-GDP and alpha-ribazole to generate adenosylcobalamin (Ado-cobalamin). Also synthesizes adenosylcobalamin 5'-phosphate from adenosylcobinamide-GDP and alpha-ribazole 5'-phosphate. This is Adenosylcobinamide-GDP ribazoletransferase from Pseudomonas aeruginosa (strain ATCC 15692 / DSM 22644 / CIP 104116 / JCM 14847 / LMG 12228 / 1C / PRS 101 / PAO1).